The sequence spans 369 residues: uncharacterized protein (369 aa).

Disordered stretches follow at residues Met-1–Ser-42, Pro-60–Asp-107, Ala-146–Gly-177, and Leu-214–Asp-369. A compositionally biased stretch (polar residues) spans Val-12–Asn-24. 2 stretches are compositionally biased toward low complexity: residues Ser-30–Ser-42 and Tyr-70–Ser-86. Polar residues predominate over residues Ala-87–Asn-101. A compositionally biased stretch (acidic residues) spans Asp-155–Gly-169. Residues Asn-219–Tyr-324 show a composition bias toward low complexity.

This is an uncharacterized protein from Dictyostelium discoideum (Social amoeba).